The sequence spans 511 residues: MNLLKPLISVSLMTLISRILGFVRDILIASIFGASMFTDAFFISFKIPNLLRRIFSDGTFSQAFIPVLMEYKSDKNEKNIKNFLSSILGFMSFFLLLLTILGGFFSQSIILIRAPGFLNPPEKLILSTNLLRIMFPYILLISLSSLCSSILNSWNYFSIPAFSPIFLNISIIFFSVFFSSFFCPSIIVLAWSVIIGGLVQLLYQLPFLYKINMLVLPNFHWNNIGLLRILKKMGPAILGASANQISLIINTIFSSLLNSGSISWIYYADRLIEFPVGILGVSLSTVLFTSLAKNYKNGIKLEYKKLLDWGLRISLIVSLPGSVILFFLAKPVIIVLFQYGKFTDFDVLMTARVLKLYSCGLISFIFVKILSSAFYACEEIKIPMKASLFTLLLNQLMNPFLIFYFQHAGIALSLSITSWVNFLLLSRKLYQRKIVSLQRSEFIFIIYIILATLVMIVILFVVLHMMSVWNIGTFINKIIRLFFGKYVSGITYLFMMNILGIRLLNFFYKNS.

11 consecutive transmembrane segments (helical) span residues 25–45, 85–105, 133–153, 156–178, 245–265, 271–291, 315–335, 356–376, 400–420, 442–462, and 481–501; these read DILI…FISF, SSIL…GGFF, IMFP…ILNS, YFSI…SVFF, ISLI…ISWI, LIEF…FTSL, LIVS…VIIV, LYSC…AFYA, FLIF…TSWV, FIFI…LFVV, and LFFG…ILGI.

It belongs to the MurJ/MviN family.

Its subcellular location is the cell inner membrane. It participates in cell wall biogenesis; peptidoglycan biosynthesis. In terms of biological role, involved in peptidoglycan biosynthesis. Transports lipid-linked peptidoglycan precursors from the inner to the outer leaflet of the cytoplasmic membrane. The protein is Probable lipid II flippase MurJ of Buchnera aphidicola subsp. Acyrthosiphon pisum (strain APS) (Acyrthosiphon pisum symbiotic bacterium).